Reading from the N-terminus, the 516-residue chain is Probable cytosol aminopeptidase (516 aa).

Residues lysine 288 and aspartate 293 each contribute to the Mn(2+) site. The active site involves lysine 300. Mn(2+) contacts are provided by aspartate 311, aspartate 370, and glutamate 372. Arginine 374 is a catalytic residue.

Belongs to the peptidase M17 family. Mn(2+) is required as a cofactor.

It is found in the cytoplasm. The enzyme catalyses Release of an N-terminal amino acid, Xaa-|-Yaa-, in which Xaa is preferably Leu, but may be other amino acids including Pro although not Arg or Lys, and Yaa may be Pro. Amino acid amides and methyl esters are also readily hydrolyzed, but rates on arylamides are exceedingly low.. The catalysed reaction is Release of an N-terminal amino acid, preferentially leucine, but not glutamic or aspartic acids.. Functionally, presumably involved in the processing and regular turnover of intracellular proteins. Catalyzes the removal of unsubstituted N-terminal amino acids from various peptides. The polypeptide is Probable cytosol aminopeptidase (Cupriavidus taiwanensis (strain DSM 17343 / BCRC 17206 / CCUG 44338 / CIP 107171 / LMG 19424 / R1) (Ralstonia taiwanensis (strain LMG 19424))).